A 522-amino-acid polypeptide reads, in one-letter code: F-box-like/WD repeat-containing protein TBL1Y (522 aa).

An N-acetylserine modification is found at S2. Residues 4–36 enclose the LisH domain; sequence TSDEVNFLVYRYLQESGFSHSAFTFGIESHISQ. An F-box-like domain is found at 41 to 86; that stretch reads GTLVPPSALISILQKGLQYVEAEISINKDGTVFDSRPIESLSLIVA. N6-acetyllysine is present on K102. S130 carries the post-translational modification Phosphoserine. WD repeat units follow at residues 177–216, 233–272, 274–313, 316–354, 357–396, 399–447, 450–489, and 491–521; these read GHES…NGGS, PSNK…ASTL, QHKG…AKQQ, FHSA…PVKT, GHTN…CVHD, AHSK…CTHT, KHQE…LVHS, and QGTG…CVLD. Residue K287 forms a Glycyl lysine isopeptide (Lys-Gly) (interchain with G-Cter in SUMO2) linkage.

It belongs to the WD repeat EBI family. Probable component of the N-Cor repressor complex and some E3 ubiquitin ligase complex. Interacts with NCOR2. Fetal brain and prostate. Expressed in the cochlear spiral ganglion neurons, and in outer and inner hair cells.

The protein resides in the nucleus. In terms of biological role, F-box-like protein involved in the recruitment of the ubiquitin/19S proteasome complex to nuclear receptor-regulated transcription units. Plays an essential role in transcription activation mediated by nuclear receptors. Probably acts as integral component of corepressor complexes that mediates the recruitment of the 19S proteasome complex, leading to the subsequent proteasomal degradation of transcription repressor complexes, thereby allowing cofactor exchange. The sequence is that of F-box-like/WD repeat-containing protein TBL1Y (TBL1Y) from Homo sapiens (Human).